A 220-amino-acid chain; its full sequence is Translin-1 (220 aa).

This sequence belongs to the translin family. In terms of assembly, forms an octameric ring-shaped structure, which is capable of binding DNA or RNA.

Its subcellular location is the cytoplasm. It localises to the nucleus. DNA-binding protein that specifically recognizes consensus sequences at the breakpoint junctions in chromosomal translocations. Selectively binds single-stranded d(GT)n and d(GTT)n microsatellite repeats. Has much higher affinities for the homologous RNA sequences (GU)n and (GUU)n. Does not bind double-stranded DNA. Has a role in meiosis. This Schizosaccharomyces pombe (strain 972 / ATCC 24843) (Fission yeast) protein is Translin-1 (tsn1).